A 249-amino-acid chain; its full sequence is Phosphate import ATP-binding protein PstB (249 aa).

In terms of domain architecture, ABC transporter spans 3 to 244 (IEANDVHVYY…PKKKRTQNYI (242 aa)). 35–42 (GPSGCGKS) is an ATP binding site.

Belongs to the ABC transporter superfamily. Phosphate importer (TC 3.A.1.7) family. In terms of assembly, the complex is composed of two ATP-binding proteins (PstB), two transmembrane proteins (PstC and PstA) and a solute-binding protein (PstS).

Its subcellular location is the cell inner membrane. The catalysed reaction is phosphate(out) + ATP + H2O = ADP + 2 phosphate(in) + H(+). In terms of biological role, part of the ABC transporter complex PstSACB involved in phosphate import. Responsible for energy coupling to the transport system. This Cytophaga hutchinsonii (strain ATCC 33406 / DSM 1761 / CIP 103989 / NBRC 15051 / NCIMB 9469 / D465) protein is Phosphate import ATP-binding protein PstB.